The sequence spans 248 residues: DNA repair protein RecO (248 aa).

The protein belongs to the RecO family.

Involved in DNA repair and RecF pathway recombination. This Streptomyces griseus subsp. griseus (strain JCM 4626 / CBS 651.72 / NBRC 13350 / KCC S-0626 / ISP 5235) protein is DNA repair protein RecO.